The following is a 617-amino-acid chain: Protein fem-1 homolog C (617 aa).

Residue M1 is modified to N-acetylmethionine. ANK repeat units follow at residues 2–31 (DLKT…KEEV), 40–70 (NGAT…SIEV), 82–111 (EGAP…SVNN), 115–144 (TNST…DLEV), 148–177 (HGHT…DVNR), 181–210 (KGNT…KMEK), and 213–242 (YGMT…TSKT). 2 TPR repeats span residues 245 to 279 (INAL…RYSD) and 338 to 371 (SYYI…QQSN). ANK repeat units follow at residues 481-523 (NNFS…DVNV) and 527-556 (DDNS…HFDA).

Belongs to the fem-1 family. Component of a Cul2-RING (CRL2) E3 ubiquitin-protein ligase complex, also named ECS (Elongin BC-CUL2/5-SOCS-box protein) complex, composed of CUL2, Elongin BC (ELOB and ELOC), RBX1 and substrate-specific adapter FEM1C. In terms of tissue distribution, widely expressed. Highly expressed in kidney, cardiac tissue, skeletal muscle and testis. Expressed at lower levels in other tissues, including cartilage.

It functions in the pathway protein modification; protein ubiquitination. Substrate-recognition component of a Cul2-RING (CRL2) E3 ubiquitin-protein ligase complex of the DesCEND (destruction via C-end degrons) pathway, which recognizes a C-degron located at the extreme C terminus of target proteins, leading to their ubiquitination and degradation. The C-degron recognized by the DesCEND pathway is usually a motif of less than ten residues and can be present in full-length proteins, truncated proteins or proteolytically cleaved forms. The CRL2(FEM1C) complex specifically recognizes proteins with an arginine at the C-terminus: recognizes and binds proteins ending with -Lys/Arg-Xaa-Arg and -Lys/Arg-Xaa-Xaa-Arg C-degrons, such as SIL1 or OR51B2, leading to their ubiquitination and degradation. The CRL2(FEM1C) complex mediates ubiquitination and degradation of truncated MSRB1/SEPX1 selenoproteins produced by failed UGA/Sec decoding. Promotes ubiquitination and degradation of SLBP. The protein is Protein fem-1 homolog C of Homo sapiens (Human).